Consider the following 135-residue polypeptide: Large ribosomal subunit protein eL32 (135 aa).

Belongs to the eukaryotic ribosomal protein eL32 family.

In Methanococcus maripaludis (strain DSM 14266 / JCM 13030 / NBRC 101832 / S2 / LL), this protein is Large ribosomal subunit protein eL32 (rpl32e).